The primary structure comprises 156 residues: Putative type II restriction enzyme ApeKORF2002P (156 aa).

It to M.jannaschii MJ1199.

The catalysed reaction is Endonucleolytic cleavage of DNA to give specific double-stranded fragments with terminal 5'-phosphates.. Functionally, a putative type II restriction enzyme, its methylase would be APE_2002. The polypeptide is Putative type II restriction enzyme ApeKORF2002P (Aeropyrum pernix (strain ATCC 700893 / DSM 11879 / JCM 9820 / NBRC 100138 / K1)).